An 82-amino-acid polypeptide reads, in one-letter code: Large ribosomal subunit protein bL31B (82 aa).

This sequence belongs to the bacterial ribosomal protein bL31 family. Type B subfamily. As to quaternary structure, part of the 50S ribosomal subunit.

The sequence is that of Large ribosomal subunit protein bL31B from Proteus mirabilis (strain HI4320).